Reading from the N-terminus, the 238-residue chain is Ribosomal RNA small subunit methyltransferase E 1 (238 aa).

The protein belongs to the RNA methyltransferase RsmE family.

Its subcellular location is the cytoplasm. It carries out the reaction uridine(1498) in 16S rRNA + S-adenosyl-L-methionine = N(3)-methyluridine(1498) in 16S rRNA + S-adenosyl-L-homocysteine + H(+). Functionally, specifically methylates the N3 position of the uracil ring of uridine 1498 (m3U1498) in 16S rRNA. Acts on the fully assembled 30S ribosomal subunit. This chain is Ribosomal RNA small subunit methyltransferase E 1 (rsmE1), found in Borreliella burgdorferi (strain ATCC 35210 / DSM 4680 / CIP 102532 / B31) (Borrelia burgdorferi).